The chain runs to 226 residues: Ribosomal RNA small subunit methyltransferase G (226 aa).

Residues Gly86, Leu91, 137–138, and Arg150 contribute to the S-adenosyl-L-methionine site; that span reads VE.

This sequence belongs to the methyltransferase superfamily. RNA methyltransferase RsmG family.

It localises to the cytoplasm. The catalysed reaction is guanosine(527) in 16S rRNA + S-adenosyl-L-methionine = N(7)-methylguanosine(527) in 16S rRNA + S-adenosyl-L-homocysteine. In terms of biological role, specifically methylates the N7 position of guanine in position 527 of 16S rRNA. The protein is Ribosomal RNA small subunit methyltransferase G of Polaromonas sp. (strain JS666 / ATCC BAA-500).